Reading from the N-terminus, the 473-residue chain is Methionine aminopeptidase 2 (473 aa).

Residues 23–121 are disordered; it reads LAEDSSNGTQ…KLVSIDQSYP (99 aa). Residues 41–53 show a composition bias toward polar residues; sequence KATTAVGQDNGNN. Positions 73–83 are enriched in acidic residues; it reads DDDDDDEDDDV. Low complexity predominate over residues 84–93; it reads AAAAAAVGDA. Basic residues predominate over residues 97–113; the sequence is KKKKKKKSSNKKKKKKL. His-224 is a substrate binding site. A divalent metal cation-binding residues include Asp-244, Asp-255, and His-326. A substrate-binding site is contributed by His-334. Glu-359 and Glu-454 together coordinate a divalent metal cation.

Belongs to the peptidase M24A family. Methionine aminopeptidase eukaryotic type 2 subfamily. Co(2+) is required as a cofactor. The cofactor is Zn(2+). Requires Mn(2+) as cofactor. Fe(2+) serves as cofactor.

It is found in the cytoplasm. It carries out the reaction Release of N-terminal amino acids, preferentially methionine, from peptides and arylamides.. Its function is as follows. Cotranslationally removes the N-terminal methionine from nascent proteins. The N-terminal methionine is often cleaved when the second residue in the primary sequence is small and uncharged (Met-Ala-, Cys, Gly, Pro, Ser, Thr, or Val). The protein is Methionine aminopeptidase 2 of Lodderomyces elongisporus (strain ATCC 11503 / CBS 2605 / JCM 1781 / NBRC 1676 / NRRL YB-4239) (Yeast).